Consider the following 276-residue polypeptide: MTRPIRHQYEDLMRLVATQGAFKADRTGTGTKSVFGHQMRFDLNEGFPLVTTKKVHLKSIIQELLWFLTGSSSNHWLTERGVTIWNEWARADGDLGPVYGVQWRSWPTPDGGHIDQIAEVIKTLKTNPDSRRIIVSAWNVADLDKMALMPCHALFQFYVAPATEAGGKGKLSCQLYQRSADIFLGVPFNIASYALLTHMVAQQCDLDVGDFIWTGGDCHIYSNHQEQVALQLGRAPFAYPLLHIRRKPDSIFDYQFEDFEFLDYQHHPAIKAPVAV.

DUMP is bound at residue Arg26. His56 lines the (6R)-5,10-methylene-5,6,7,8-tetrahydrofolate pocket. Residue 131–132 (RR) coordinates dUMP. Catalysis depends on Cys151, which acts as the Nucleophile. Residues 178–181 (RSAD), Asn189, and 219–221 (HIY) contribute to the dUMP site. Asp181 lines the (6R)-5,10-methylene-5,6,7,8-tetrahydrofolate pocket. Ala275 serves as a coordination point for (6R)-5,10-methylene-5,6,7,8-tetrahydrofolate.

Belongs to the thymidylate synthase family. Bacterial-type ThyA subfamily. Homodimer.

It localises to the cytoplasm. It catalyses the reaction dUMP + (6R)-5,10-methylene-5,6,7,8-tetrahydrofolate = 7,8-dihydrofolate + dTMP. The protein operates within pyrimidine metabolism; dTTP biosynthesis. Catalyzes the reductive methylation of 2'-deoxyuridine-5'-monophosphate (dUMP) to 2'-deoxythymidine-5'-monophosphate (dTMP) while utilizing 5,10-methylenetetrahydrofolate (mTHF) as the methyl donor and reductant in the reaction, yielding dihydrofolate (DHF) as a by-product. This enzymatic reaction provides an intracellular de novo source of dTMP, an essential precursor for DNA biosynthesis. The polypeptide is Thymidylate synthase (Polaromonas naphthalenivorans (strain CJ2)).